A 161-amino-acid chain; its full sequence is Dihydrofolate reductase (161 aa).

A DHFR domain is found at 2–157; sequence TLSIIVAHDK…IPHTFLHLVR (156 aa). 6–8 lines the substrate pocket; sequence IVA. NADP(+) is bound by residues 7–8 and 15–20; these read VA and IGYQNQ. Substrate is bound at residue Asp-28. 44-47 provides a ligand contact to NADP(+); it reads GRKT. Residue Arg-58 coordinates substrate. NADP(+) contacts are provided by residues 63–66 and 93–98; these read LTNQ and FGGQTL. A substrate-binding site is contributed by Thr-112.

It belongs to the dihydrofolate reductase family.

The catalysed reaction is (6S)-5,6,7,8-tetrahydrofolate + NADP(+) = 7,8-dihydrofolate + NADPH + H(+). It functions in the pathway cofactor biosynthesis; tetrahydrofolate biosynthesis; 5,6,7,8-tetrahydrofolate from 7,8-dihydrofolate: step 1/1. In terms of biological role, key enzyme in folate metabolism. Catalyzes an essential reaction for de novo glycine and purine synthesis, and for DNA precursor synthesis. This Staphylococcus epidermidis protein is Dihydrofolate reductase (folA).